A 426-amino-acid polypeptide reads, in one-letter code: MNKSESLYAAAQQLIPGGVNSPVRAFNGVGGTPLFIERADGAYLYDADEQAYIDYVGSWGPMVLGHNHPAIRDAVIAAAERGLSFGAPTEMEVQMARLVTSLVPSMDMVRMVNSGTEATMSAIRLARGYTGRDKIIKFEGCYHGHADCLLVKAGSGALTLGQPNSPGVPADFARHTLTCVYNDLSSVRAAFEQYPDEIAAIIVEPVAGNMNCVPPLPDFLPGLRALCDEFGALFIIDEVMTGFRVALAGAQSHYGVVPDLTCLGKIIGGGMPVGAFGGKREVMQALAPTGPVYQAGTLSGNPIAMAAGFACLTEVAKPGVHEKLTALTNQLAEGLLAAAKAENIPLVVNQAGGMFGLFFTDAESVTCYQDVMKCDVERFKLFFHMMLEEGVYLAPSAFEAGFMSLAHTPQDIDRTIEAAQLCFSRL.

K265 carries the N6-(pyridoxal phosphate)lysine modification.

It belongs to the class-III pyridoxal-phosphate-dependent aminotransferase family. HemL subfamily. In terms of assembly, homodimer. Pyridoxal 5'-phosphate is required as a cofactor.

The protein resides in the cytoplasm. The enzyme catalyses (S)-4-amino-5-oxopentanoate = 5-aminolevulinate. Its pathway is porphyrin-containing compound metabolism; protoporphyrin-IX biosynthesis; 5-aminolevulinate from L-glutamyl-tRNA(Glu): step 2/2. The protein is Glutamate-1-semialdehyde 2,1-aminomutase of Pectobacterium carotovorum subsp. carotovorum (strain PC1).